We begin with the raw amino-acid sequence, 177 residues long: Large ribosomal subunit protein uL6 (177 aa).

The protein belongs to the universal ribosomal protein uL6 family. In terms of assembly, part of the 50S ribosomal subunit.

In terms of biological role, this protein binds to the 23S rRNA, and is important in its secondary structure. It is located near the subunit interface in the base of the L7/L12 stalk, and near the tRNA binding site of the peptidyltransferase center. This chain is Large ribosomal subunit protein uL6, found in Saccharophagus degradans (strain 2-40 / ATCC 43961 / DSM 17024).